A 378-amino-acid chain; its full sequence is Protein FAM185A (378 aa).

The chain is Protein FAM185A (Fam185a) from Mus musculus (Mouse).